The sequence spans 605 residues: Formin-binding protein 1-like (605 aa).

The F-BAR domain occupies 1–263 (MSWGTELWDQ…AAKSVDERRD (263 aa)). Residues 66-258 (FTSCVAFFNI…EGMILAAKSV (193 aa)) are a coiled coil. The interval 245–535 (SKCLEGMILA…EFDDEFEDDD (291 aa)) is interaction with CDC42. At S295 the chain carries Phosphoserine. The stretch at 392–484 (LEDFSHLPPE…VEGKTGGRGD (93 aa)) forms a coiled coil. Residues 397–474 (HLPPEQRRKK…IHKNEAWLSE (78 aa)) enclose the REM-1 domain. Over residues 476 to 490 (EGKTGGRGDRRHSSD) the composition is skewed to basic and acidic residues. Positions 476–539 (EGKTGGRGDR…EFEDDDPLPA (64 aa)) are disordered. S488, S501, and S505 each carry phosphoserine. The interaction with DNM1 stretch occupies residues 522-605 (GHHNEFDDEF…VTLEKNSKGS (84 aa)). The segment covering 527 to 536 (FDDEFEDDDP) has biased composition (acidic residues). The SH3 domain maps to 538 to 599 (PAIGHCKAIY…PTSYIDVTLE (62 aa)). Residues 541–597 (GHCKAIYPFDGHNEGTLAMKEGEVLYIIEEDKGDGWTRARRQNGEEGYVPTSYIDVT) are interaction with DNM2 and WASL. An interaction with DAAM1, DIAPH1 and DIAPH2 region spans residues 541–605 (GHCKAIYPFD…VTLEKNSKGS (65 aa)).

Belongs to the FNBP1 family. In terms of assembly, homodimerizes, the dimers can polymerize end-to-end to form filamentous structures. Interacts with GTP-bound CDC42. Interacts with DAAM1, DIAPH1, DIAPH2, DNM1, DNM2 and WASL/N-WASP. Interacts with ATG3. Interacts (via SH3 domain) with ABI1, WASF2, CDC42 and WIPF1.

It localises to the cytoplasm. The protein resides in the cytoskeleton. Its subcellular location is the cell cortex. It is found in the cytoplasmic vesicle. The protein localises to the cell membrane. Its function is as follows. Required to coordinate membrane tubulation with reorganization of the actin cytoskeleton during endocytosis. May bind to lipids such as phosphatidylinositol 4,5-bisphosphate and phosphatidylserine and promote membrane invagination and the formation of tubules. Also promotes CDC42-induced actin polymerization by activating the WASL/N-WASP-WASPIP/WIP complex, the predominant form of WASL/N-WASP in cells. Actin polymerization may promote the fission of membrane tubules to form endocytic vesicles. Essential for autophagy of intracellular bacterial pathogens. The sequence is that of Formin-binding protein 1-like (FNBP1L) from Homo sapiens (Human).